A 294-amino-acid polypeptide reads, in one-letter code: 4-hydroxy-tetrahydrodipicolinate synthase (294 aa).

Threonine 45 contributes to the pyruvate binding site. Catalysis depends on tyrosine 133, which acts as the Proton donor/acceptor. Catalysis depends on lysine 161, which acts as the Schiff-base intermediate with substrate. A pyruvate-binding site is contributed by isoleucine 203.

It belongs to the DapA family. Homotetramer; dimer of dimers.

The protein localises to the cytoplasm. The enzyme catalyses L-aspartate 4-semialdehyde + pyruvate = (2S,4S)-4-hydroxy-2,3,4,5-tetrahydrodipicolinate + H2O + H(+). Its pathway is amino-acid biosynthesis; L-lysine biosynthesis via DAP pathway; (S)-tetrahydrodipicolinate from L-aspartate: step 3/4. Its function is as follows. Catalyzes the condensation of (S)-aspartate-beta-semialdehyde [(S)-ASA] and pyruvate to 4-hydroxy-tetrahydrodipicolinate (HTPA). The polypeptide is 4-hydroxy-tetrahydrodipicolinate synthase (Shewanella sp. (strain ANA-3)).